The following is a 422-amino-acid chain: G-protein coupled receptor 83 (422 aa).

Positions 1–16 are cleaved as a signal peptide; the sequence is MGRRGALLCLLPLLRA. Over 17–70 the chain is Extracellular; it reads AERPEGRADEPGLEAALAGPNASHFFWSNYSFSDWQNFVGRRRYGAESQNPTVK. Residues asparagine 37 and asparagine 45 are each glycosylated (N-linked (GlcNAc...) asparagine). Residues 71-91 form a helical membrane-spanning segment; the sequence is ALLVVAYSFIIVFSLFGNVLV. Topologically, residues 92-106 are cytoplasmic; that stretch reads CHVIFKNQRMRSATS. A helical membrane pass occupies residues 107 to 128; it reads LFIVNLAVADILITLLNTPFTL. Topologically, residues 129-144 are extracellular; the sequence is VRFVNSTWVFGKGMCH. The N-linked (GlcNAc...) asparagine glycan is linked to asparagine 133. A helical transmembrane segment spans residues 145-166; that stretch reads VSRFAQYCSLHVSALTLTAIAV. Residues 167-185 lie on the Cytoplasmic side of the membrane; it reads DRHQVIMHPLKPRISITKG. Residues 186–207 form a helical membrane-spanning segment; it reads VIYITVIWTMATFFSLPHAICQ. The Extracellular portion of the chain corresponds to 208 to 237; the sequence is KLFTFKYSEDIVRSLCLPDFPEPADLFWKY. The helical transmembrane segment at 238-259 threads the bilayer; that stretch reads LDLATFILLYILPLLIISVAYA. The Cytoplasmic portion of the chain corresponds to 260–292; sequence RVAKKLWLCNTIGDVTTEQYLALRRKKKKTIKM. Residues 293 to 314 traverse the membrane as a helical segment; that stretch reads LMLVVVLFALCWFPLNCYVLLL. At 315-326 the chain is on the extracellular side; that stretch reads SSKVIHTNNALY. A helical membrane pass occupies residues 327–347; that stretch reads FAFHWFAMSSTCYNPFIYCWL. Topologically, residues 348–422 are cytoplasmic; sequence NENFRIELKA…SSVEPIVAMS (75 aa).

The protein belongs to the G-protein coupled receptor 1 family.

Its subcellular location is the cell membrane. In terms of biological role, G-protein coupled receptor for PEN, a neuropeptide produced from the precursor protein, proSAAS (encoded by PCSK1N). Acts through a G(i)- and G(q)-alpha-alpha-mediated pathway in response to PEN. Plays a role in food intake and body weight regulation. May contribute to the regulation of anxiety-related behaviors. The chain is G-protein coupled receptor 83 (GPR83) from Canis lupus familiaris (Dog).